The following is a 482-amino-acid chain: Alpha-ketoglutarate semialdehyde dehydrogenase (482 aa).

Positions 1–28 (MTDPSKNYVNGEWVTSETGETTEVTNPA) are disordered. Over residues 11 to 25 (GEWVTSETGETTEVT) the composition is skewed to low complexity. The active site involves Cys-284.

The protein belongs to the aldehyde dehydrogenase family. As to quaternary structure, homotetramer.

It carries out the reaction 2,5-dioxopentanoate + NADP(+) + H2O = 2-oxoglutarate + NADPH + 2 H(+). The protein operates within carbohydrate metabolism; D-xylose degradation. In terms of biological role, alpha-ketoglutarate semialdehyde dehydrogenase involved in the degradation of D-xylose, a major component of hemicelluloses such as xylan. Catalyzes the fifth reaction in the xylose utilization pathway through dehydratation of alpha-ketoglutarate semialdehyde (2,5-dioxopentanoate) into alpha-ketoglutarate. The polypeptide is Alpha-ketoglutarate semialdehyde dehydrogenase (Haloferax volcanii (strain ATCC 29605 / DSM 3757 / JCM 8879 / NBRC 14742 / NCIMB 2012 / VKM B-1768 / DS2) (Halobacterium volcanii)).